An 81-amino-acid chain; its full sequence is Apolipoprotein C-I, acidic form (81 aa).

A signal peptide spans 1–24; sequence MRLFLSLLVVVLSIVLEGPTPAQG.

The protein belongs to the apolipoprotein C1 family.

It localises to the secreted. In Theropithecus gelada (Gelada baboon), this protein is Apolipoprotein C-I, acidic form (APOC1A).